We begin with the raw amino-acid sequence, 189 residues long: GTP cyclohydrolase 1 (189 aa).

Positions 79, 82, and 151 each coordinate Zn(2+).

Belongs to the GTP cyclohydrolase I family. As to quaternary structure, toroid-shaped homodecamer, composed of two pentamers of five dimers.

The enzyme catalyses GTP + H2O = 7,8-dihydroneopterin 3'-triphosphate + formate + H(+). It participates in cofactor biosynthesis; 7,8-dihydroneopterin triphosphate biosynthesis; 7,8-dihydroneopterin triphosphate from GTP: step 1/1. The polypeptide is GTP cyclohydrolase 1 (Lactiplantibacillus plantarum (strain ATCC BAA-793 / NCIMB 8826 / WCFS1) (Lactobacillus plantarum)).